We begin with the raw amino-acid sequence, 266 residues long: Norfluorocurarine synthase 2 (266 aa).

One can recognise an AB hydrolase-1 domain in the interval 11–121 (HFVLVHGAGH…VMPDSTHPPN (111 aa)). Active-site residues include Ser-86, Asp-216, and His-244.

It belongs to the AB hydrolase superfamily. Homodimer.

The enzyme catalyses 17-dehydropreakuammicine + H2O = norfluorocurarine + methanol + CO2. It functions in the pathway alkaloid biosynthesis. Hydrolase involved in the biosynthesis of curare monoterpene indole alkaloids (MIAs), natural products such as diaboline, a pharmacologically active compound used to regulate blood pressure. Curare alkaloids act as animal glycine receptor antagonists. Catalyzes the conversion of dehydropreakuammicine to norfluorocurarine. This Strychnos sp protein is Norfluorocurarine synthase 2.